The sequence spans 317 residues: MRFSVGLGKEGAEERLARRGVSRRDFLKFCTAIAVTMGMGPAFAPEVARALTGSRRPSVVYLHNAECTGCSESVLRAFQPYLDELILDTISLDYHETIMAAAGDAAEAALHQAVANPDGFICIVEGAIPTADNGIYGKVANHTMLSICSDIVPKAKAVIAYGTCATFGGVQAAKPNPTGAKGLNDALKHLGVNAINLAGCPPNPYNLVGTLVYYLKNNAAPEMDEFNRPLMFFGQSVHDNCPRLKHFDAGEFAPSFESEEARKGWCLYELGCKGPSTMNNCPKIKFNQTNWPVEAGHPCIGCSEPDFWDEKSPFYES.

The segment at residues 1 to 49 is a signal peptide (tat-type signal); sequence MRFSVGLGKEGAEERLARRGVSRRDFLKFCTAIAVTMGMGPAFAPEVAR. [4Fe-4S] cluster contacts are provided by C67, C70, C164, C200, H238, C241, C266, and C272. [3Fe-4S] cluster contacts are provided by C281, C299, and C302.

Belongs to the [NiFe]/[NiFeSe] hydrogenase small subunit family. Heterodimer of a large and a small subunit. Requires [3Fe-4S] cluster as cofactor. [4Fe-4S] cluster serves as cofactor. Post-translationally, predicted to be exported by the Tat system. The position of the signal peptide cleavage has not been experimentally proven.

The protein resides in the periplasm. The enzyme catalyses 2 Fe(III)-[cytochrome c3] + H2 = 2 Fe(II)-[cytochrome c3] + 2 H(+). In Nitratidesulfovibrio vulgaris (strain ATCC 29579 / DSM 644 / CCUG 34227 / NCIMB 8303 / VKM B-1760 / Hildenborough) (Desulfovibrio vulgaris), this protein is Periplasmic [NiFe] hydrogenase small subunit 1 (hynB1).